The sequence spans 103 residues: Phosphoribosyl-ATP pyrophosphatase (103 aa).

It belongs to the PRA-PH family.

The protein localises to the cytoplasm. The catalysed reaction is 1-(5-phospho-beta-D-ribosyl)-ATP + H2O = 1-(5-phospho-beta-D-ribosyl)-5'-AMP + diphosphate + H(+). The protein operates within amino-acid biosynthesis; L-histidine biosynthesis; L-histidine from 5-phospho-alpha-D-ribose 1-diphosphate: step 2/9. This Cereibacter sphaeroides (strain ATCC 17029 / ATH 2.4.9) (Rhodobacter sphaeroides) protein is Phosphoribosyl-ATP pyrophosphatase.